Consider the following 311-residue polypeptide: MDKSIKREHVLREIHELLASNGFETSHIYERSCFDLMARRKLLLLLLKVLVNIDGINSLQAHEIRTLAHTFLASPIIVGVRSKTEPLKEDVVYERHGIPAVAPETFRNMVADGEYPEIIADRGGYYVHIDGKTLREVREEYNLSLKDLADLAHVSRKTIYKYENGLARASAETAMILEEILNIRITLSIDIFSVPDRDEIEIKPSGRLADIGFGMIETHKTPFDAVAKEIKFDNTVITNLEKERDSRTLRRMAVPLKDLSLVSGSESVFIIDNPRINENIEGIPVIKSWEIGEMESSREFLKVIAERKTCS.

Residues 134 to 192 (LREVREEYNLSLKDLADLAHVSRKTIYKYENGLARASAETAMILEEILNIRITLSIDIF) enclose the HTH cro/C1-type domain. Positions 145–164 (LKDLADLAHVSRKTIYKYEN) form a DNA-binding region, H-T-H motif.

In Methanothermobacter thermautotrophicus (strain ATCC 29096 / DSM 1053 / JCM 10044 / NBRC 100330 / Delta H) (Methanobacterium thermoautotrophicum), this protein is Putative HTH-type transcriptional regulatory protein MTH_967.